A 99-amino-acid polypeptide reads, in one-letter code: Thylakoid membrane protein ssl2009 (99 aa).

The chain crosses the membrane as a helical span at residues 10–30 (GFLLGTVIGGVVGGILGSVLA). Residues 50–84 (NLDSEENIELARRRLEDKIAQLNLVIDDVRDQLGH) are a coiled coil.

Its subcellular location is the cellular thylakoid membrane. The sequence is that of Thylakoid membrane protein ssl2009 from Synechocystis sp. (strain ATCC 27184 / PCC 6803 / Kazusa).